The chain runs to 414 residues: MHLFTVGVNHTTAPVSIRENVAFQNEHLSGALRDLNSHGIREAAILSTCNRTELYCNTDDPQKALEWLANYHRLKPQAIAPYMYTLPQENAVKHAFRVASGLDSMVLGEAQILGQMKQAVRIAENAGTLGTLLHKLFQRTFSVAKEVRTNTNIGANSVSLAAASTRLAQRIFGALNNQHVLFIGAGEMIELCAEHFAAHRPLSLTVANRTLERGQELAASIGGTSMLLADLPDRLAEFDIVITSTASQLPIVGLGMVERAIRARKHKPMFMVDLAVPRDIEPEAGELDDVFLYTVDDLAQIVQEGMENRQEAAAEAEAIIDMRVENFMQWLKTRSAVPTIRALREQAERHRLNELEKARKLLARGHDPAQVLDALSNALTNKLLHGPSHALNSATGEDREQLEATLRQLYQIHH.

Substrate contacts are provided by residues 48–51 (TCNR), serine 104, 109–111 (EAQ), and glutamine 115. Cysteine 49 acts as the Nucleophile in catalysis. Residue 184–189 (GAGEMI) participates in NADP(+) binding.

Belongs to the glutamyl-tRNA reductase family. As to quaternary structure, homodimer.

It carries out the reaction (S)-4-amino-5-oxopentanoate + tRNA(Glu) + NADP(+) = L-glutamyl-tRNA(Glu) + NADPH + H(+). The protein operates within porphyrin-containing compound metabolism; protoporphyrin-IX biosynthesis; 5-aminolevulinate from L-glutamyl-tRNA(Glu): step 1/2. Its function is as follows. Catalyzes the NADPH-dependent reduction of glutamyl-tRNA(Glu) to glutamate 1-semialdehyde (GSA). The protein is Glutamyl-tRNA reductase of Methylobacillus flagellatus (strain ATCC 51484 / DSM 6875 / VKM B-1610 / KT).